We begin with the raw amino-acid sequence, 507 residues long: ATP synthase subunit alpha, mitochondrial (507 aa).

Residue 171–178 coordinates ATP; that stretch reads GDRQTGKT.

The protein belongs to the ATPase alpha/beta chains family. In terms of assembly, F-type ATPases have 2 components, CF(1) - the catalytic core - and CF(0) - the membrane proton channel. CF(1) has five subunits: alpha(3), beta(3), gamma(1), delta(1), epsilon(1). CF(0) has three main subunits: a, b and c.

The protein resides in the mitochondrion. Its subcellular location is the mitochondrion inner membrane. Its function is as follows. Mitochondrial membrane ATP synthase (F(1)F(0) ATP synthase or Complex V) produces ATP from ADP in the presence of a proton gradient across the membrane which is generated by electron transport complexes of the respiratory chain. F-type ATPases consist of two structural domains, F(1) - containing the extramembraneous catalytic core, and F(0) - containing the membrane proton channel, linked together by a central stalk and a peripheral stalk. During catalysis, ATP synthesis in the catalytic domain of F(1) is coupled via a rotary mechanism of the central stalk subunits to proton translocation. Subunits alpha and beta form the catalytic core in F(1). Rotation of the central stalk against the surrounding alpha(3)beta(3) subunits leads to hydrolysis of ATP in three separate catalytic sites on the beta subunits. Subunit alpha does not bear the catalytic high-affinity ATP-binding sites. The polypeptide is ATP synthase subunit alpha, mitochondrial (ATPA) (Brassica napus (Rape)).